We begin with the raw amino-acid sequence, 183 residues long: MLTMDDIVREGHPALREVASEVTFPLSDEEKKLGHDMLEFLINSQDEELAEKYGLRGGVGIAAPQLAVTKRILAIHVHDEKDRLYSYVLYNPKIRSHSVQQACLSGGEGCLSVDREVPGYVVRSERVTIDAFDENGIPLKLRFKDYPAIVVQHEIDHLNGIMFYDHINKENPSYLPPDVDVFG.

Cys110 and His153 together coordinate Fe cation. Residue Glu154 is part of the active site. His157 is a Fe cation binding site.

The protein belongs to the polypeptide deformylase family. Requires Fe(2+) as cofactor.

The catalysed reaction is N-terminal N-formyl-L-methionyl-[peptide] + H2O = N-terminal L-methionyl-[peptide] + formate. Functionally, removes the formyl group from the N-terminal Met of newly synthesized proteins. Requires at least a dipeptide for an efficient rate of reaction. N-terminal L-methionine is a prerequisite for activity but the enzyme has broad specificity at other positions. In Listeria welshimeri serovar 6b (strain ATCC 35897 / DSM 20650 / CCUG 15529 / CIP 8149 / NCTC 11857 / SLCC 5334 / V8), this protein is Peptide deformylase.